A 203-amino-acid chain; its full sequence is Urease accessory protein UreG (203 aa).

A GTP-binding site is contributed by glycine 14–threonine 21.

This sequence belongs to the SIMIBI class G3E GTPase family. UreG subfamily. As to quaternary structure, homodimer. UreD, UreF and UreG form a complex that acts as a GTP-hydrolysis-dependent molecular chaperone, activating the urease apoprotein by helping to assemble the nickel containing metallocenter of UreC. The UreE protein probably delivers the nickel.

Its subcellular location is the cytoplasm. In terms of biological role, facilitates the functional incorporation of the urease nickel metallocenter. This process requires GTP hydrolysis, probably effectuated by UreG. The chain is Urease accessory protein UreG from Allorhizobium ampelinum (strain ATCC BAA-846 / DSM 112012 / S4) (Agrobacterium vitis (strain S4)).